We begin with the raw amino-acid sequence, 502 residues long: MKIRAEEISEIIKKQIREYGKEVEVSETGTIISIGDGIARIHGLSGAMAGELLEFPGGVSGMVLNLEEDNVGAAVLGEFTAIKEGHTVKRTGRIAEVPVGEALIGRVVNAIGEPIDGKGPIKTDTFSKVEIKAPGIVARKSVDQPMASGLKAVDAMVPIGRGQRELIIGDRQTGKTAVAVDTIINQKGGDVICIYVAIGQKRSTVAQVVAKLSDHGAMDYTIVVAASASESAPLQFIAPYSGVTMGEYFRDKGQHALIIYDDLSKQAVAYRQLSLLLRRPPGREAYPGDVFYLHSRLLERACKLSDECGGGSLTALPIIETQAGDVSAYIPTNVISITDGQIYLESDLFFSGVRPAINVGLSVSRVGGKAQTKSMKQVAGTLRLNLAQYREMAAFAQFGSDLDKATQMQLARGERLVEILKQPQYRPLSNEKQVLIIFAANNGFLDELPVSTLRRYEDEMYAFFDNRQADLLSELRDKKAIDDELKKRIVAALEQFKKEFSA.

169–176 (GDRQTGKT) provides a ligand contact to ATP.

This sequence belongs to the ATPase alpha/beta chains family. F-type ATPases have 2 components, CF(1) - the catalytic core - and CF(0) - the membrane proton channel. CF(1) has five subunits: alpha(3), beta(3), gamma(1), delta(1), epsilon(1). CF(0) has three main subunits: a(1), b(2) and c(9-12). The alpha and beta chains form an alternating ring which encloses part of the gamma chain. CF(1) is attached to CF(0) by a central stalk formed by the gamma and epsilon chains, while a peripheral stalk is formed by the delta and b chains.

It localises to the cell inner membrane. The catalysed reaction is ATP + H2O + 4 H(+)(in) = ADP + phosphate + 5 H(+)(out). In terms of biological role, produces ATP from ADP in the presence of a proton gradient across the membrane. The alpha chain is a regulatory subunit. This chain is ATP synthase subunit alpha, found in Pelobacter propionicus (strain DSM 2379 / NBRC 103807 / OttBd1).